The chain runs to 372 residues: uncharacterized protein (372 aa).

A PNPLA domain is found at 38 to 270; it reads FFIEGGGTKG…ANNIPLDYLI (233 aa). The GXGXXG motif lies at 42–47; the sequence is GGGTKG. A GXSXG motif is present at residues 74–78; sequence GTSVG. The Nucleophile role is filled by S76. The active-site Proton acceptor is the D257. The short motif at 257-259 is the DGA/G element; that stretch reads DGG.

Probable lipid hydrolase. This is an uncharacterized protein from Acanthamoeba polyphaga (Amoeba).